We begin with the raw amino-acid sequence, 446 residues long: Iroquois homeobox protein 5a (446 aa).

Residues 117–173 constitute a DNA-binding region (homeobox); the sequence is NATRDATATLKAWLNEHRKNPYPTKGEKIMLAIITKMTLTQVSTWFANARRRLKKEN. The segment at 175 to 312 is disordered; the sequence is MTWTPRNRSE…IHSPPSAPKP (138 aa). Residues 184–201 show a composition bias toward acidic residues; that stretch reads EDEEEDENIDLEKNDDDE. 2 stretches are compositionally biased toward basic and acidic residues: residues 202–220 and 227–258; these read PNKP…DHKL and PCDR…RTDL. Composition is skewed to polar residues over residues 264 to 274 and 293 to 303; these read KPTTSSPSVLQ and STGNSNVTSVI.

This sequence belongs to the TALE/IRO homeobox family.

Its subcellular location is the nucleus. In terms of biological role, transcription factor. Binds to consensus iroquois binding site (IBS) motifs 5'-ACANNTGT-3' or 5'-ACANNNTGT-3' in regulatory elements of target genes. Required, together with irx7, for hyoid joint formation; they act cell autonomously to repress expression of cartilage matrix genes, such as collagen col2a1a, within immature chondrocytes of the joint interzone. May compete with or modify Sox9a activity, thereby reducing Sox9a-mediated activation of col2a1a. Probably acts in the developing hyoid joint downstream of Bmp signaling. In concert with irx6a, plays a role in visual performance. This is Iroquois homeobox protein 5a (irx5a) from Danio rerio (Zebrafish).